Here is a 376-residue protein sequence, read N- to C-terminus: N-acetyldiaminopimelate deacetylase (376 aa).

Aspartate 69 is an active-site residue. Catalysis depends on glutamate 128, which acts as the Proton acceptor.

This sequence belongs to the peptidase M20A family. N-acetyldiaminopimelate deacetylase subfamily.

It carries out the reaction N-acetyl-(2S,6S)-2,6-diaminopimelate + H2O = (2S,6S)-2,6-diaminopimelate + acetate. The protein operates within amino-acid biosynthesis; L-lysine biosynthesis via DAP pathway; LL-2,6-diaminopimelate from (S)-tetrahydrodipicolinate (acetylase route): step 3/3. Its function is as follows. Catalyzes the conversion of N-acetyl-diaminopimelate to diaminopimelate and acetate. This chain is N-acetyldiaminopimelate deacetylase, found in Bacillus cereus (strain 03BB102).